A 266-amino-acid polypeptide reads, in one-letter code: Glutamate racemase (266 aa).

Substrate-binding positions include 9-10 (DS) and 41-42 (YG). Catalysis depends on cysteine 73, which acts as the Proton donor/acceptor. 74-75 (NS) is a substrate binding site. Catalysis depends on cysteine 183, which acts as the Proton donor/acceptor. 184 to 185 (TH) provides a ligand contact to substrate.

It belongs to the aspartate/glutamate racemases family.

It catalyses the reaction L-glutamate = D-glutamate. Its pathway is cell wall biogenesis; peptidoglycan biosynthesis. Its function is as follows. Provides the (R)-glutamate required for cell wall biosynthesis. The polypeptide is Glutamate racemase (Shewanella halifaxensis (strain HAW-EB4)).